The sequence spans 347 residues: Adenine deaminase (347 aa).

Residues H16, H18, and H204 each contribute to the Zn(2+) site. Catalysis depends on E207, which acts as the Proton donor. Residue D285 participates in Zn(2+) binding. D286 is a binding site for substrate.

Belongs to the metallo-dependent hydrolases superfamily. Adenosine and AMP deaminases family. Adenine deaminase type 2 subfamily. Zn(2+) serves as cofactor.

It localises to the cytoplasm. Its subcellular location is the nucleus. It carries out the reaction adenine + H2O + H(+) = hypoxanthine + NH4(+). Catalyzes the hydrolytic deamination of adenine to hypoxanthine. Plays an important role in the purine salvage pathway and in nitrogen catabolism. The polypeptide is Adenine deaminase (Candida glabrata (strain ATCC 2001 / BCRC 20586 / JCM 3761 / NBRC 0622 / NRRL Y-65 / CBS 138) (Yeast)).